Consider the following 473-residue polypeptide: Ribulose bisphosphate carboxylase large chain 2 (473 aa).

2 residues coordinate substrate: Asn116 and Thr166. The active-site Proton acceptor is Lys168. Lys170 serves as a coordination point for substrate. Positions 194, 196, and 197 each coordinate Mg(2+). An N6-carboxylysine modification is found at Lys194. Catalysis depends on His287, which acts as the Proton acceptor. Positions 288, 320, and 372 each coordinate substrate.

It belongs to the RuBisCO large chain family. Type I subfamily. Heterohexadecamer of 8 large chains and 8 small chains. Mg(2+) is required as a cofactor.

The catalysed reaction is 2 (2R)-3-phosphoglycerate + 2 H(+) = D-ribulose 1,5-bisphosphate + CO2 + H2O. It carries out the reaction D-ribulose 1,5-bisphosphate + O2 = 2-phosphoglycolate + (2R)-3-phosphoglycerate + 2 H(+). Its function is as follows. RuBisCO catalyzes two reactions: the carboxylation of D-ribulose 1,5-bisphosphate, the primary event in carbon dioxide fixation, as well as the oxidative fragmentation of the pentose substrate. Both reactions occur simultaneously and in competition at the same active site. The polypeptide is Ribulose bisphosphate carboxylase large chain 2 (Acidithiobacillus ferrooxidans (strain ATCC 23270 / DSM 14882 / CIP 104768 / NCIMB 8455) (Ferrobacillus ferrooxidans (strain ATCC 23270))).